The sequence spans 182 residues: ATP synthase subunit delta (182 aa).

It belongs to the ATPase delta chain family. In terms of assembly, F-type ATPases have 2 components, F(1) - the catalytic core - and F(0) - the membrane proton channel. F(1) has five subunits: alpha(3), beta(3), gamma(1), delta(1), epsilon(1). F(0) has three main subunits: a(1), b(2) and c(10-14). The alpha and beta chains form an alternating ring which encloses part of the gamma chain. F(1) is attached to F(0) by a central stalk formed by the gamma and epsilon chains, while a peripheral stalk is formed by the delta and b chains.

The protein resides in the cell membrane. F(1)F(0) ATP synthase produces ATP from ADP in the presence of a proton or sodium gradient. F-type ATPases consist of two structural domains, F(1) containing the extramembraneous catalytic core and F(0) containing the membrane proton channel, linked together by a central stalk and a peripheral stalk. During catalysis, ATP synthesis in the catalytic domain of F(1) is coupled via a rotary mechanism of the central stalk subunits to proton translocation. Functionally, this protein is part of the stalk that links CF(0) to CF(1). It either transmits conformational changes from CF(0) to CF(1) or is implicated in proton conduction. This chain is ATP synthase subunit delta, found in Alkalihalophilus pseudofirmus (strain ATCC BAA-2126 / JCM 17055 / OF4) (Bacillus pseudofirmus).